The sequence spans 279 residues: Eukaryotic translation initiation factor 3 subunit G (279 aa).

2 disordered regions span residues 69–90 (AKYG…QLGE) and 149–193 (LNGG…EARD). At Ser77 the chain carries Phosphoserine. The RRM domain maps to 196 to 275 (TTLKVSQLNT…LILHLEWSKK (80 aa)).

Belongs to the eIF-3 subunit G family. In terms of assembly, component of the eukaryotic translation initiation factor 3 (eIF-3) complex.

The protein resides in the cytoplasm. Functionally, RNA-binding component of the eukaryotic translation initiation factor 3 (eIF-3) complex, which is involved in protein synthesis of a specialized repertoire of mRNAs and, together with other initiation factors, stimulates binding of mRNA and methionyl-tRNAi to the 40S ribosome. The eIF-3 complex specifically targets and initiates translation of a subset of mRNAs involved in cell proliferation. This subunit can bind 18S rRNA. The polypeptide is Eukaryotic translation initiation factor 3 subunit G (Lodderomyces elongisporus (strain ATCC 11503 / CBS 2605 / JCM 1781 / NBRC 1676 / NRRL YB-4239) (Yeast)).